We begin with the raw amino-acid sequence, 240 residues long: UDP-2,3-diacylglucosamine hydrolase (240 aa).

5 residues coordinate Mn(2+): D9, H11, D43, N81, and H116. 81–82 serves as a coordination point for substrate; the sequence is NR. Substrate contacts are provided by D124, S162, K166, K169, and H197. Residues H197 and H199 each coordinate Mn(2+).

The protein belongs to the LpxH family. Mn(2+) serves as cofactor.

It is found in the cell inner membrane. The catalysed reaction is UDP-2-N,3-O-bis[(3R)-3-hydroxytetradecanoyl]-alpha-D-glucosamine + H2O = 2-N,3-O-bis[(3R)-3-hydroxytetradecanoyl]-alpha-D-glucosaminyl 1-phosphate + UMP + 2 H(+). Its pathway is glycolipid biosynthesis; lipid IV(A) biosynthesis; lipid IV(A) from (3R)-3-hydroxytetradecanoyl-[acyl-carrier-protein] and UDP-N-acetyl-alpha-D-glucosamine: step 4/6. In terms of biological role, hydrolyzes the pyrophosphate bond of UDP-2,3-diacylglucosamine to yield 2,3-diacylglucosamine 1-phosphate (lipid X) and UMP by catalyzing the attack of water at the alpha-P atom. Involved in the biosynthesis of lipid A, a phosphorylated glycolipid that anchors the lipopolysaccharide to the outer membrane of the cell. The polypeptide is UDP-2,3-diacylglucosamine hydrolase (Neisseria meningitidis serogroup A / serotype 4A (strain DSM 15465 / Z2491)).